Here is a 336-residue protein sequence, read N- to C-terminus: Urokinase plasminogen activator surface receptor (336 aa).

The first 23 residues, methionine 1–glycine 23, serve as a signal peptide directing secretion. UPAR/Ly6 domains follow at residues leucine 24–proline 111, leucine 116–alanine 208, and histidine 215–glutamine 302. Cystine bridges form between cysteine 26-cysteine 47, cysteine 29-cysteine 35, and cysteine 40-cysteine 68. N-linked (GlcNAc...) asparagine glycosylation occurs at asparagine 75. 11 disulfides stabilise this stretch: cysteine 94/cysteine 99, cysteine 118/cysteine 145, cysteine 121/cysteine 128, cysteine 138/cysteine 170, cysteine 176/cysteine 193, cysteine 194/cysteine 199, cysteine 217/cysteine 245, cysteine 220/cysteine 228, cysteine 238/cysteine 264, cysteine 270/cysteine 288, and cysteine 289/cysteine 294. N-linked (GlcNAc...) asparagine glycosylation is found at asparagine 195 and asparagine 223.

Monomer. Interacts (via the UPAR/Ly6 domains) with SRPX2. Interacts with MRC2. Interacts with FAP (seprase); the interaction occurs at the cell surface of invadopodia membrane. Interacts with SORL1 (via N-terminal ectodomain); this interaction decreases PLAUR internalization. The ternary complex composed of PLAUR-PLAU-SERPINE1 also interacts with SORL1.

Its subcellular location is the cell membrane. The protein localises to the cell projection. The protein resides in the invadopodium membrane. Acts as a receptor for urokinase plasminogen activator. Plays a role in localizing and promoting plasmin formation. Mediates the proteolysis-independent signal transduction activation effects of U-PA. It is subject to negative-feedback regulation by U-PA which cleaves it into an inactive form. The protein is Urokinase plasminogen activator surface receptor (PLAUR) of Aotus trivirgatus (Three-striped night monkey).